The following is a 156-amino-acid chain: ATP synthase subunit b (156 aa).

The helical transmembrane segment at 3–23 (INFTLLAQALAFAGLIWIIAT) threads the bilayer.

This sequence belongs to the ATPase B chain family. F-type ATPases have 2 components, F(1) - the catalytic core - and F(0) - the membrane proton channel. F(1) has five subunits: alpha(3), beta(3), gamma(1), delta(1), epsilon(1). F(0) has three main subunits: a(1), b(2) and c(10-14). The alpha and beta chains form an alternating ring which encloses part of the gamma chain. F(1) is attached to F(0) by a central stalk formed by the gamma and epsilon chains, while a peripheral stalk is formed by the delta and b chains.

It localises to the cell inner membrane. Functionally, f(1)F(0) ATP synthase produces ATP from ADP in the presence of a proton or sodium gradient. F-type ATPases consist of two structural domains, F(1) containing the extramembraneous catalytic core and F(0) containing the membrane proton channel, linked together by a central stalk and a peripheral stalk. During catalysis, ATP synthesis in the catalytic domain of F(1) is coupled via a rotary mechanism of the central stalk subunits to proton translocation. Its function is as follows. Component of the F(0) channel, it forms part of the peripheral stalk, linking F(1) to F(0). The sequence is that of ATP synthase subunit b from Stenotrophomonas maltophilia (strain R551-3).